A 245-amino-acid polypeptide reads, in one-letter code: Terpene cyclase ausL (245 aa).

The next 7 helical transmembrane spans lie at 17–37 (ILAI…VNYI), 51–71 (IGIL…WMFP), 76–96 (HWQG…LVTL), 113–133 (IVFI…ALAA), 138–158 (ALGF…GGIA), 170–190 (SYLI…KLCI), and 206–226 (MCWF…FLYF).

Belongs to the paxB family.

It localises to the membrane. It participates in secondary metabolite biosynthesis; terpenoid biosynthesis. Functionally, terpene cyclase; part of the gene cluster A that mediates the biosynthesis of the fungal meroterpenoid acetoxydehydroaustin. The first step of the pathway is the synthesis of 3,5-dimethylorsellinic acid by the polyketide synthase ausA. 3,5-dimethylorsellinic acid is then prenylated by the polyprenyl transferase ausN. Further epoxidation by the FAD-dependent monooxygenase ausM and cyclization by the probable terpene cyclase ausL lead to the formation of protoaustinoid A. Protoaustinoid A is then oxidized to spiro-lactone preaustinoid A3 by the combined action of the FAD-binding monooxygenases ausB and ausC, and the dioxygenase ausE. Acid-catalyzed keto-rearrangement and ring contraction of the tetraketide portion of preaustinoid A3 by ausJ lead to the formation of preaustinoid A4. The aldo-keto reductase ausK, with the help of ausH, is involved in the next step by transforming preaustinoid A4 into isoaustinone which is in turn hydroxylated by the P450 monooxygenase ausI to form austinolide. The cytochrome P450 monooxygenase ausG then modifies austinolide to austinol. Austinol is further acetylated to austin by the O-acetyltransferase ausP, which spontaneously changes to dehydroaustin. The cytochrome P450 monooxygenase then converts dehydroaustin is into 7-dehydrodehydroaustin. The hydroxylation catalyzed by ausR permits the second O-acetyltransferase ausQ to add an additional acetyl group to the molecule, leading to the formation of acetoxydehydroaustin. Due to genetic rearrangements of the clusters and the subsequent loss of some enzymes, the end product of the Penicillium brasilianum austinoid biosynthesis clusters is acetoxydehydroaustin. In Penicillium brasilianum, this protein is Terpene cyclase ausL.